Consider the following 159-residue polypeptide: MRKAVCPGSFDPVTMGHLDIIGRAAQQYDEVTVLVTANPNKPSGMFTVDERLALIKESTAHFVNVKVDNWAGLLVDYTTANGIDAIVKGLRTALDYEYELPMAQMNRKLAGVDTLFLMTDPQYGYISSTLCKEVTKYGGDVSDMLPPAVAAAIVEKVKS.

Serine 9 contacts substrate. ATP contacts are provided by residues 9–10 and histidine 17; that span reads SF. Residues lysine 41, leucine 74, and lysine 88 each coordinate substrate. ATP-binding positions include 89 to 91, glutamate 99, and 123 to 129; these read GLR and YGYISST.

The protein belongs to the bacterial CoaD family. Homohexamer. Mg(2+) is required as a cofactor.

The protein localises to the cytoplasm. The enzyme catalyses (R)-4'-phosphopantetheine + ATP + H(+) = 3'-dephospho-CoA + diphosphate. Its pathway is cofactor biosynthesis; coenzyme A biosynthesis; CoA from (R)-pantothenate: step 4/5. Its function is as follows. Reversibly transfers an adenylyl group from ATP to 4'-phosphopantetheine, yielding dephospho-CoA (dPCoA) and pyrophosphate. This Corynebacterium diphtheriae (strain ATCC 700971 / NCTC 13129 / Biotype gravis) protein is Phosphopantetheine adenylyltransferase.